The sequence spans 329 residues: Glycerol-3-phosphate dehydrogenase [NAD(P)+] (329 aa).

Residues S10, W11, R31, and K105 each contribute to the NADPH site. The sn-glycerol 3-phosphate site is built by K105, G134, and S136. Residue A138 participates in NADPH binding. Sn-glycerol 3-phosphate-binding residues include K189, D242, S252, R253, and N254. K189 serves as the catalytic Proton acceptor. R253 contributes to the NADPH binding site. Residues V277 and E279 each contribute to the NADPH site.

It belongs to the NAD-dependent glycerol-3-phosphate dehydrogenase family.

It localises to the cytoplasm. It catalyses the reaction sn-glycerol 3-phosphate + NAD(+) = dihydroxyacetone phosphate + NADH + H(+). It carries out the reaction sn-glycerol 3-phosphate + NADP(+) = dihydroxyacetone phosphate + NADPH + H(+). Its pathway is membrane lipid metabolism; glycerophospholipid metabolism. Catalyzes the reduction of the glycolytic intermediate dihydroxyacetone phosphate (DHAP) to sn-glycerol 3-phosphate (G3P), the key precursor for phospholipid synthesis. This is Glycerol-3-phosphate dehydrogenase [NAD(P)+] from Neisseria meningitidis serogroup A / serotype 4A (strain DSM 15465 / Z2491).